The chain runs to 336 residues: GTPase Obg (336 aa).

In terms of domain architecture, Obg spans 1–159 (MKFVDSATVF…LELAMELKLM (159 aa)). Residues 120–143 (GGHGGRGNQHFATSTNQAPRRSEP) form a disordered region. Over residues 129 to 138 (HFATSTNQAP) the composition is skewed to polar residues. One can recognise an OBG-type G domain in the interval 160-323 (ADVGLVGFPN…LKDELWRQVS (164 aa)). GTP-binding positions include 166–173 (GFPNAGKS), 191–195 (FTTLV), 213–216 (DIPG), 280–283 (TKMD), and 304–306 (SSV). Mg(2+) contacts are provided by Ser173 and Thr193.

This sequence belongs to the TRAFAC class OBG-HflX-like GTPase superfamily. OBG GTPase family. In terms of assembly, monomer. Requires Mg(2+) as cofactor.

The protein resides in the cytoplasm. Its function is as follows. An essential GTPase which binds GTP, GDP and possibly (p)ppGpp with moderate affinity, with high nucleotide exchange rates and a fairly low GTP hydrolysis rate. Plays a role in control of the cell cycle, stress response, ribosome biogenesis and in those bacteria that undergo differentiation, in morphogenesis control. This is GTPase Obg from Chlorobium phaeovibrioides (strain DSM 265 / 1930) (Prosthecochloris vibrioformis (strain DSM 265)).